The primary structure comprises 95 residues: Small ribosomal subunit protein bS20c (95 aa).

Belongs to the bacterial ribosomal protein bS20 family.

The protein resides in the plastid. The protein localises to the cyanelle. Functionally, binds directly to 16S ribosomal RNA. The chain is Small ribosomal subunit protein bS20c (rps20) from Cyanophora paradoxa.